The chain runs to 269 residues: GTP cyclohydrolase FolE2 (269 aa).

The protein belongs to the GTP cyclohydrolase IV family.

It carries out the reaction GTP + H2O = 7,8-dihydroneopterin 3'-triphosphate + formate + H(+). It functions in the pathway cofactor biosynthesis; 7,8-dihydroneopterin triphosphate biosynthesis; 7,8-dihydroneopterin triphosphate from GTP: step 1/1. Converts GTP to 7,8-dihydroneopterin triphosphate. The protein is GTP cyclohydrolase FolE2 of Thiobacillus denitrificans (strain ATCC 25259 / T1).